A 272-amino-acid polypeptide reads, in one-letter code: Shikimate dehydrogenase (NADP(+)) (272 aa).

Shikimate contacts are provided by residues 14–16 (SKS) and T61. The Proton acceptor role is filled by K65. E77 is a binding site for NADP(+). Positions 86 and 102 each coordinate shikimate. NADP(+) is bound by residues 126 to 130 (GAGGA), 149 to 154 (NRTASR), and M213. Y215 contributes to the shikimate binding site. Residue G237 coordinates NADP(+).

The protein belongs to the shikimate dehydrogenase family. As to quaternary structure, homodimer.

It carries out the reaction shikimate + NADP(+) = 3-dehydroshikimate + NADPH + H(+). The protein operates within metabolic intermediate biosynthesis; chorismate biosynthesis; chorismate from D-erythrose 4-phosphate and phosphoenolpyruvate: step 4/7. In terms of biological role, involved in the biosynthesis of the chorismate, which leads to the biosynthesis of aromatic amino acids. Catalyzes the reversible NADPH linked reduction of 3-dehydroshikimate (DHSA) to yield shikimate (SA). The protein is Shikimate dehydrogenase (NADP(+)) of Salmonella schwarzengrund (strain CVM19633).